Consider the following 774-residue polypeptide: Chondroitin sulfate synthase 2 (774 aa).

Over 1 to 15 the chain is Cytoplasmic; that stretch reads MRASLLLSVLRPAGP. Residues 16–34 form a helical; Signal-anchor for type II membrane protein membrane-spanning segment; the sequence is VAVGISLGFTLSLLSVTWV. Over 35–774 the chain is Lumenal; it reads EEPCGPGPPQ…LFEQEQGNST (740 aa). The tract at residues 37–103 is disordered; the sequence is PCGPGPPQPG…AQPGQATKKA (67 aa). Residues 54 to 67 are compositionally biased toward polar residues; that stretch reads GNTNAARRPNSVQP. N-linked (GlcNAc...) asparagine glycosylation is found at Asn138 and Asn361. A divalent metal cation is bound at residue Asp616.

The protein belongs to the chondroitin N-acetylgalactosaminyltransferase family. In terms of assembly, interacts with PRKN. Mn(2+) serves as cofactor. It depends on Co(2+) as a cofactor. In terms of tissue distribution, isoform 1, isoform 2 and isoform 3 are expressed in brain (at protein level).

Its subcellular location is the golgi apparatus. It is found in the golgi stack membrane. It localises to the cytoplasm. The protein localises to the cytosol. The protein resides in the mitochondrion. Its subcellular location is the mitochondrion matrix. It catalyses the reaction 3-O-(beta-D-GlcA-(1-&gt;3)-beta-D-GalNAc-(1-&gt;4)-beta-D-GlcA-(1-&gt;3)-beta-D-Gal-(1-&gt;3)-beta-D-Gal-(1-&gt;4)-beta-D-Xyl)-L-seryl-[protein] + UDP-N-acetyl-alpha-D-galactosamine = 3-O-(beta-D-GalNAc-(1-&gt;4)-beta-D-GlcA-(1-&gt;3)-beta-D-GalNAc-(1-&gt;4)-beta-D-GlcA-(1-&gt;3)-beta-D-Gal-(1-&gt;3)-beta-D-Gal-(1-&gt;4)-beta-D-Xyl)-L-seryl-[protein] + UDP + H(+). It carries out the reaction 3-O-{beta-D-GlcA-(1-&gt;3)-[beta-D-GalNAc-(1-&gt;4)-beta-D-GlcA-(1-&gt;3)](n)-beta-D-GalNAc-(1-&gt;4)-beta-D-GlcA-(1-&gt;3)-beta-D-Gal-(1-&gt;3)-beta-D-Gal-(1-&gt;4)-beta-D-Xyl}-L-seryl-[protein] + UDP-N-acetyl-alpha-D-galactosamine = 3-O-{[beta-D-GalNAc-(1-&gt;4)-beta-D-GlcA-(1-&gt;3)](n+1)-beta-D-GalNAc-(1-&gt;4)-beta-D-GlcA-(1-&gt;3)-beta-D-Gal-(1-&gt;3)-beta-D-Gal-(1-&gt;4)-beta-D-Xyl}-L-seryl-[protein] + UDP + H(+). The enzyme catalyses 3-O-(beta-D-GalNAc-(1-&gt;4)-beta-D-GlcA-(1-&gt;3)-beta-D-Gal-(1-&gt;3)-beta-D-Gal-(1-&gt;4)-beta-D-Xyl)-L-seryl-[protein] + UDP-alpha-D-glucuronate = 3-O-(beta-D-GlcA-(1-&gt;3)-beta-D-GalNAc-(1-&gt;4)-beta-D-GlcA-(1-&gt;3)-beta-D-Gal-(1-&gt;3)-beta-D-Gal-(1-&gt;4)-beta-D-Xyl)-L-seryl-[protein] + UDP + H(+). The catalysed reaction is 3-O-{[beta-D-GalNAc-(1-&gt;4)-beta-D-GlcA-(1-&gt;3)](n)-beta-D-GalNAc-(1-&gt;4)-beta-D-GlcA-(1-&gt;3)-beta-D-Gal-(1-&gt;3)-beta-D-Gal-(1-&gt;4)-beta-D-Xyl}-L-seryl-[protein] + UDP-alpha-D-glucuronate = 3-O-{beta-D-GlcA-(1-&gt;3)-[beta-D-GalNAc-(1-&gt;4)-beta-D-GlcA-(1-&gt;3)](n)-beta-D-GalNAc-(1-&gt;4)-beta-D-GlcA-(1-&gt;3)-beta-D-Gal-(1-&gt;3)-beta-D-Gal-(1-&gt;4)-beta-D-Xyl}-L-seryl-[protein] + UDP + H(+). Functionally, has both beta-1,3-glucuronic acid and beta-1,4-N-acetylgalactosamine transferase activity. Transfers glucuronic acid (GlcUA) from UDP-GlcUA and N-acetylgalactosamine (GalNAc) from UDP-GalNAc to the non-reducing end of the elongating chondroitin polymer. Seems to act as a specific activating factor for CHSY1 in chondroitin polymerization. In terms of biological role, may facilitate PRKN transport into the mitochondria. In collaboration with PRKN, may enhance cell viability and protect cells from oxidative stress. The sequence is that of Chondroitin sulfate synthase 2 from Mus musculus (Mouse).